A 214-amino-acid chain; its full sequence is Adenylate kinase (214 aa).

Residue 10 to 15 (GAGKGT) coordinates ATP. Residues 30 to 59 (CTGDMLRAAVKAGSELGLKAKEIMDAGKLV) form an NMP region. AMP contacts are provided by residues threonine 31, arginine 36, 57 to 59 (KLV), 85 to 88 (GFPR), and glutamine 92. Residues 122-159 (GRRVHAASGRVYHIKFNPPKVEDKDDVTGEELTIRKDD) are LID. Residues arginine 123 and 132-133 (VY) each bind ATP. Residues arginine 156 and arginine 167 each contribute to the AMP site. Arginine 200 contacts ATP.

It belongs to the adenylate kinase family. As to quaternary structure, monomer.

It localises to the cytoplasm. The enzyme catalyses AMP + ATP = 2 ADP. It functions in the pathway purine metabolism; AMP biosynthesis via salvage pathway; AMP from ADP: step 1/1. In terms of biological role, catalyzes the reversible transfer of the terminal phosphate group between ATP and AMP. Plays an important role in cellular energy homeostasis and in adenine nucleotide metabolism. The chain is Adenylate kinase from Yersinia enterocolitica.